An 863-amino-acid chain; its full sequence is Potassium/sodium hyperpolarization-activated cyclic nucleotide-gated channel 2 (863 aa).

Residues 1 to 10 show a composition bias toward gly residues; the sequence is MDARGGGGRP. The tract at residues 1 to 131 is disordered; sequence MDARGGGGRP…AGPAGEPRGS (131 aa). The Cytoplasmic segment spans residues 1–188; that stretch reads MDARGGGGRP…PYSDFRFYWD (188 aa). The segment covering 17–47 has biased composition (pro residues); sequence TPAPGPPPPPPPPAPPQPQPPPAPPPNPTTP. Over residues 106-128 the composition is skewed to low complexity; the sequence is GAASGPSAAEEAGSEEAGPAGEP. A phosphoserine mark is found at S119 and S134. The segment at 131–182 is involved in subunit assembly; it reads SQASFLQRQFGALLQPGVNKFSLRMFGSQKAVEREQERVKSAGAWIIHPYSD. Residues 189-209 form a helical membrane-spanning segment; it reads FTMLLFMVGNLIIIPVGITFF. Over 210–213 the chain is Extracellular; it reads KDET. The helical transmembrane segment at 214-234 threads the bilayer; it reads TAPWIVFNVVSDTFFLMDLVL. At 235–261 the chain is on the cytoplasmic side; sequence NFRTGIVIEDNTEIILDPEKIKKKYLR. A helical membrane pass occupies residues 262 to 282; it reads TWFVVDFVSSIPVDYIFLIVE. Residues 283 to 290 are Extracellular-facing; it reads KGIDSEVY. The helical; Voltage-sensor transmembrane segment at 291–311 threads the bilayer; sequence KTARALRIVRFTKILSLLRLL. The Cytoplasmic portion of the chain corresponds to 312-342; the sequence is RLSRLIRYIHQWEEIFHMTYDLASAVMRICN. A helical transmembrane segment spans residues 343–363; that stretch reads LISMMLLLCHWDGCLQFLVPM. The Extracellular portion of the chain corresponds to 364–386; it reads LQDFPSDCWVSINNMVNHSWSEL. An N-linked (GlcNAc...) asparagine glycan is attached at N380. The segment at residues 387-408 is an intramembrane region (pore-forming); sequence YSFALFKAMSHMLCIGYGRQAP. The Extracellular portion of the chain corresponds to 409 to 413; sequence ESMTD. A helical transmembrane segment spans residues 414 to 434; sequence IWLTMLSMIVGATCYAMFIGH. The Cytoplasmic portion of the chain corresponds to 435–863; sequence ATALIQSLDS…SARSRLSSNL (429 aa). G581, E582, C584, R591, T592, and R632 together coordinate 3',5'-cyclic AMP. Residue S641 is modified to Phosphoserine; by PKG/PRKG2. S726 bears the Phosphoserine mark. R728 bears the Omega-N-methylarginine mark. The tract at residues 730–863 is disordered; that stretch reads VRRAPPGPLP…SARSRLSSNL (134 aa). The segment covering 734 to 755 has biased composition (pro residues); that stretch reads PPGPLPPAASPGPPAASPPAAP. S743, S750, and S757 each carry phosphoserine. Composition is skewed to low complexity over residues 756-765, 778-800, and 808-834; these read SSPRAPRTSP, PALP…PSLP, and PAAS…AAPS. Phosphoserine is present on residues S840, S842, and S847.

The protein belongs to the potassium channel HCN family. In terms of assembly, homotetramer. The channel is composed of a homo- or heterotetrameric complex of pore-forming subunits. Heterotetramer with HCN1. Forms an obligate 4:4 complex with accessory subunit PEX5L; regulates HCN2 cell-surface expression and cyclic nucleotide dependence. Interacts with KCNE2. S-palmitoylated. In terms of processing, N-glycosylated; required for cell surface trafficking of HCN2. Post-translationally, phosphorylation at Ser-641 by PRKG2 shifts the voltage-dependence to more negative voltages, hence counteracting the stimulatory effect of cGMP on gating. As to expression, highly expressed in brain. Detected at low levels in heart, in ventricle, atrium and in sinoatrial node (SAN).

It localises to the cell membrane. It catalyses the reaction Na(+)(in) = Na(+)(out). The catalysed reaction is K(+)(in) = K(+)(out). It carries out the reaction NH4(+)(in) = NH4(+)(out). With respect to regulation, activated by cAMP, and at 10-100 times higher concentrations, also by cGMP. cAMP binding causes a conformation change that leads to the assembly of an active tetramer and channel opening. In the absence of cAMP, the C-terminal region is thought to exert a tonic inhibition on the pore when HCN2 is in a non-tetrameric form. Channel activity is modulated by intracellular chloride ions and pH; acidic pH shifts the activation to more negative voltages. Phosphatidylinositol-4,5- bisphosphate (PIP(2)) acts as a ligand that allosterically opens HCN2 by shifting voltage-dependent channel activation toward depolarized potentials. Inhibited by extracellular cesium ions. Hyperpolarization-activated ion channel exhibiting weak selectivity for potassium over sodium ions. Contributes to the native pacemaker currents in heart (If) and in neurons (Ih). Can also transport ammonium in the distal nephron. Involved in the initiation of neuropathic pain in sensory neurons. This Mus musculus (Mouse) protein is Potassium/sodium hyperpolarization-activated cyclic nucleotide-gated channel 2.